Consider the following 773-residue polypeptide: Lon protease homolog 2, peroxisomal (773 aa).

The Lon N-terminal domain maps to Leu9–Arg198. Position 336–343 (Gly336–Thr343) interacts with ATP. Residues Pro587 to Lys766 enclose the Lon proteolytic domain. Active-site residues include Ser672 and Lys715. The short motif at Ala771–Leu773 is the Microbody targeting signal element.

Belongs to the peptidase S16 family.

The protein resides in the peroxisome matrix. It catalyses the reaction Hydrolysis of proteins in presence of ATP.. In terms of biological role, ATP-dependent serine protease that mediates the selective degradation of misfolded and unassembled polypeptides in the peroxisomal matrix. Necessary for type 2 peroxisome targeting signal (PTS2)-containing protein processing and facilitates peroxisome matrix protein import. This is Lon protease homolog 2, peroxisomal from Caenorhabditis briggsae.